The chain runs to 502 residues: GTPase Obg (502 aa).

One can recognise an Obg domain in the interval 2–159; the sequence is NRFIDRVVLH…HDLILELKSM (158 aa). In terms of domain architecture, OBG-type G spans 160 to 341; the sequence is ADVGLVGFPS…LKYKLLEIVQ (182 aa). Residues 166–173, 191–195, 212–215, 292–295, and 322–324 contribute to the GTP site; these read GFPSAGKS, FTTLQ, DVPG, NKAD, and SAV. Residues Ser-173 and Thr-193 each contribute to the Mg(2+) site. The region spanning 364 to 444 is the OCT domain; it reads DGRRRREEFE…IGGVTFEWEP (81 aa).

Belongs to the TRAFAC class OBG-HflX-like GTPase superfamily. OBG GTPase family. Monomer. It depends on Mg(2+) as a cofactor.

Its subcellular location is the cytoplasm. Its function is as follows. An essential GTPase which binds GTP, GDP and possibly (p)ppGpp with moderate affinity, with high nucleotide exchange rates and a fairly low GTP hydrolysis rate. Plays a role in control of the cell cycle, stress response, ribosome biogenesis and in those bacteria that undergo differentiation, in morphogenesis control. This is GTPase Obg from Corynebacterium efficiens (strain DSM 44549 / YS-314 / AJ 12310 / JCM 11189 / NBRC 100395).